Consider the following 402-residue polypeptide: Aminotransferase-like protein FGM3 (402 aa).

Pyridoxal 5'-phosphate contacts are provided by residues 137 to 138 (TI), aspartate 218, and 282 to 283 (FG).

Belongs to the class-V pyridoxal-phosphate-dependent aminotransferase family. Csd subfamily.

Its function is as follows. Aminotransferase-like protein; part of the Fg3_54/C64 gene cluster that mediates the biosynthesis of the octapeptide fusaoctaxin A, a virulence factor that is required for cell-to-cell invasiveness of plant host. The 2 nonribosomal peptide synthetases NRPS9 and NRPS5 form an assembly line which likely utilizes GABA as a starter unit (loaded on the unique module M1 of NRPS9) and sequentially incorporates seven extender units composed of the residues L-Ala, L-allo-Ile, L-Ser, L-Val, L-Ser, L-Leu and L-Leu, respectively. During the process, each of the residues that are tethered on modules M3-M7 of NRPS5 containing an E domain can undergo an epimerization reaction to produce a D-configuration before the transpeptidation reaction occurs. The elongation of the peptidyl chain might be terminated by module M8-mediated L-Leu incorporation, followed by R domain-catalyzed 4 electron reduction to release the resulting octapeptide from the assembly line as an alcohol. Fusaoctaxin A is cleaved by the cluster specific ABC transporter FGM5 to the pentapeptide fusapentaxin A and the tripeptide fusatrixin A. The other enzymes from the cluster, FGM1, FGM2, FGM3 and FGM9 seem not to be involved in the biosynthesis of fusaoctaxin A and their functions have still to be determined. This Gibberella zeae (strain ATCC MYA-4620 / CBS 123657 / FGSC 9075 / NRRL 31084 / PH-1) (Wheat head blight fungus) protein is Aminotransferase-like protein FGM3.